The chain runs to 188 residues: Elongation factor P (188 aa).

Lys-34 carries the N6-(3,6-diaminohexanoyl)-5-hydroxylysine modification.

It belongs to the elongation factor P family. Post-translationally, may be beta-lysylated on the epsilon-amino group of Lys-34 by the combined action of EpmA and EpmB, and then hydroxylated on the C5 position of the same residue by EpmC (if this protein is present). Lysylation is critical for the stimulatory effect of EF-P on peptide-bond formation. The lysylation moiety may extend toward the peptidyltransferase center and stabilize the terminal 3-CCA end of the tRNA. Hydroxylation of the C5 position on Lys-34 may allow additional potential stabilizing hydrogen-bond interactions with the P-tRNA.

It is found in the cytoplasm. It participates in protein biosynthesis; polypeptide chain elongation. Its function is as follows. Involved in peptide bond synthesis. Alleviates ribosome stalling that occurs when 3 or more consecutive Pro residues or the sequence PPG is present in a protein, possibly by augmenting the peptidyl transferase activity of the ribosome. Modification of Lys-34 is required for alleviation. This chain is Elongation factor P, found in Vibrio parahaemolyticus serotype O3:K6 (strain RIMD 2210633).